The chain runs to 24 residues: EPAIYFKEQFLDGXGFTDXRIKEK.

Belongs to the calreticulin family. Monomer. Component of an EIF2 complex at least composed of CELF1/CUGBP1, CALR, CALR3, EIF2S1, EIF2S2, HSP90B1 and HSPA5. Interacts with PDIA3/ERp57 and SPACA9. Interacts with TRIM21. Interacts with NR3C1. Interacts with PPIB. Interacts (via P-domain) with PDIA5. Interacts with CLCC1. Pancreas.

It is found in the endoplasmic reticulum lumen. Its subcellular location is the cytoplasm. It localises to the cytosol. The protein resides in the cytolytic granule. The protein localises to the secreted. It is found in the extracellular space. Its subcellular location is the extracellular matrix. It localises to the cell surface. The protein resides in the sarcoplasmic reticulum lumen. The protein localises to the cytoplasmic vesicle. It is found in the secretory vesicle. Its subcellular location is the cortical granule. Its function is as follows. Calcium-binding chaperone that promotes folding, oligomeric assembly and quality control in the endoplasmic reticulum (ER) via the calreticulin/calnexin cycle. This lectin interacts transiently with almost all of the monoglucosylated glycoproteins that are synthesized in the ER. Interacts with the DNA-binding domain of NR3C1 and mediates its nuclear export. Involved in maternal gene expression regulation. May participate in oocyte maturation via the regulation of calcium homeostasis. Present in the cortical granules of non-activated oocytes, is exocytosed during the cortical reaction in response to oocyte activation and might participate in the block to polyspermy. The polypeptide is Calreticulin (CALR) (Canis lupus familiaris (Dog)).